Consider the following 316-residue polypeptide: Pantothenate kinase (316 aa).

ATP is bound at residue 95-102; the sequence is GSVAVGKS.

The protein belongs to the prokaryotic pantothenate kinase family.

The protein localises to the cytoplasm. The catalysed reaction is (R)-pantothenate + ATP = (R)-4'-phosphopantothenate + ADP + H(+). Its pathway is cofactor biosynthesis; coenzyme A biosynthesis; CoA from (R)-pantothenate: step 1/5. This Klebsiella pneumoniae (strain 342) protein is Pantothenate kinase.